Here is a 402-residue protein sequence, read N- to C-terminus: Succinyl-CoA--D-citramalate CoA-transferase (402 aa).

Asp-174 acts as the Nucleophile in catalysis.

The protein belongs to the CoA-transferase III family. In terms of assembly, homodimer.

It catalyses the reaction (3R)-citramalate + succinyl-CoA = (3R)-citramalyl-CoA + succinate. It carries out the reaction (R)-malate + succinyl-CoA = (R)-malyl-CoA + succinate. In terms of biological role, involved in the 3-hydroxypropionate cycle used for autotrophic carbon dioxide fixation, and in the glyoxylate assimilation cycle used to regenerate acetyl-CoA and produce pyruvate as universal precursor for biosynthesis. Catalyzes the transfer of CoA moiety from succinyl-CoA to D-citramalate to yield citramalyl-CoA. The chain is Succinyl-CoA--D-citramalate CoA-transferase from Chloroflexus aurantiacus (strain ATCC 29366 / DSM 635 / J-10-fl).